Consider the following 193-residue polypeptide: Zinc finger protein 740 (193 aa).

The disordered stretch occupies residues 33-75 (SKQAENGERAGSPDVLRCSSQGHRKDSDKSRSRKDDDSLSEAS). Residue K34 forms a Glycyl lysine isopeptide (Lys-Gly) (interchain with G-Cter in SUMO2) linkage. S44 bears the Phosphoserine mark. The segment covering 55–69 (HRKDSDKSRSRKDDD) has biased composition (basic and acidic residues). C2H2-type zinc fingers lie at residues 101–123 (FVCE…ILIH) and 129–151 (FECD…KRVH). Residues 157–179 (YQCERCHQCFSRTDRLLRHKRMC) form a C2H2-type 3; atypical zinc finger.

This sequence belongs to the krueppel C2H2-type zinc-finger protein family.

Its subcellular location is the nucleus. Its function is as follows. May be involved in transcriptional regulation. The protein is Zinc finger protein 740 (ZNF740) of Homo sapiens (Human).